We begin with the raw amino-acid sequence, 217 residues long: Large ribosomal subunit protein bL25 (217 aa).

The tract at residues 187–217 (STPSGLEVEEETGEEESAEPEVIEKGKKEEE) is disordered. Residues 193-207 (EVEEETGEEESAEPE) show a composition bias toward acidic residues. A compositionally biased stretch (basic and acidic residues) spans 208–217 (VIEKGKKEEE).

It belongs to the bacterial ribosomal protein bL25 family. CTC subfamily. Part of the 50S ribosomal subunit; part of the 5S rRNA/L5/L18/L25 subcomplex. Contacts the 5S rRNA. Binds to the 5S rRNA independently of L5 and L18.

This is one of the proteins that binds to the 5S RNA in the ribosome where it forms part of the central protuberance. The sequence is that of Large ribosomal subunit protein bL25 from Thermosipho africanus (strain TCF52B).